Here is a 1161-residue protein sequence, read N- to C-terminus: DNA-directed RNA polymerase subunit beta (1161 aa).

The protein belongs to the RNA polymerase beta chain family. As to quaternary structure, the RNAP catalytic core consists of 2 alpha, 1 beta, 1 beta' and 1 omega subunit. When a sigma factor is associated with the core the holoenzyme is formed, which can initiate transcription. The RNAP complex including the principal sigma factor HrdB also interacts with RNA-binding protein RbpA.

The catalysed reaction is RNA(n) + a ribonucleoside 5'-triphosphate = RNA(n+1) + diphosphate. In terms of biological role, DNA-dependent RNA polymerase catalyzes the transcription of DNA into RNA using the four ribonucleoside triphosphates as substrates. The chain is DNA-directed RNA polymerase subunit beta from Streptomyces coelicolor (strain ATCC BAA-471 / A3(2) / M145).